We begin with the raw amino-acid sequence, 365 residues long: Formamidopyrimidine-DNA glycosylase (365 aa).

The active-site Schiff-base intermediate with DNA is the P2. E3 functions as the Proton donor in the catalytic mechanism. K61 functions as the Proton donor; for beta-elimination activity in the catalytic mechanism. The interval 121-150 (RGRLAGHGDGMDGTSRTGSTLPGTGGTENS) is disordered. A compositionally biased stretch (polar residues) spans 134–150 (TSRTGSTLPGTGGTENS). Residues H186, R205, and R246 each contribute to the DNA site. The segment at 331–365 (RVYGRGGQPCRHCGTTLATAQVAGRTTVFCPQCQR) adopts an FPG-type zinc-finger fold. The Proton donor; for delta-elimination activity role is filled by R355.

The protein belongs to the FPG family. As to quaternary structure, monomer. Requires Zn(2+) as cofactor.

The enzyme catalyses Hydrolysis of DNA containing ring-opened 7-methylguanine residues, releasing 2,6-diamino-4-hydroxy-5-(N-methyl)formamidopyrimidine.. It carries out the reaction 2'-deoxyribonucleotide-(2'-deoxyribose 5'-phosphate)-2'-deoxyribonucleotide-DNA = a 3'-end 2'-deoxyribonucleotide-(2,3-dehydro-2,3-deoxyribose 5'-phosphate)-DNA + a 5'-end 5'-phospho-2'-deoxyribonucleoside-DNA + H(+). Involved in base excision repair of DNA damaged by oxidation or by mutagenic agents. Acts as a DNA glycosylase that recognizes and removes damaged bases. Has a preference for oxidized purines, such as 7,8-dihydro-8-oxoguanine (8-oxoG). Has AP (apurinic/apyrimidinic) lyase activity and introduces nicks in the DNA strand. Cleaves the DNA backbone by beta-delta elimination to generate a single-strand break at the site of the removed base with both 3'- and 5'-phosphates. This chain is Formamidopyrimidine-DNA glycosylase, found in Nitratidesulfovibrio vulgaris (strain ATCC 29579 / DSM 644 / CCUG 34227 / NCIMB 8303 / VKM B-1760 / Hildenborough) (Desulfovibrio vulgaris).